The chain runs to 271 residues: Glutamate racemase (271 aa).

Residues aspartate 10–serine 11 and tyrosine 42–glycine 43 each bind substrate. The Proton donor/acceptor role is filled by cysteine 73. Asparagine 74–threonine 75 is a binding site for substrate. The active-site Proton donor/acceptor is the cysteine 183. Threonine 184–histidine 185 serves as a coordination point for substrate.

This sequence belongs to the aspartate/glutamate racemases family.

The enzyme catalyses L-glutamate = D-glutamate. It functions in the pathway cell wall biogenesis; peptidoglycan biosynthesis. Provides the (R)-glutamate required for cell wall biosynthesis. The polypeptide is Glutamate racemase (Streptococcus thermophilus (strain CNRZ 1066)).